A 145-amino-acid polypeptide reads, in one-letter code: MKPVPLVLLITSVLLTTHIPLSTCRPRDLSLVNSQLDDVLSNGAGDDAMSYLVGEKLLQYLQRNLGAQKASGVLHLPHFPAAQLRSPHEDSSLEELTEFSKRNDDPPISIDLTFHLLRNMIEMARNENQREQAGLNRKYLDEVGK.

Positions 1–22 are cleaved as a signal peptide; the sequence is MKPVPLVLLITSVLLTTHIPLS. Valine amide is present on Val143.

It belongs to the sauvagine/corticotropin-releasing factor/urotensin I family.

The protein resides in the secreted. Its function is as follows. Urotensin is found in the teleost caudal neurosecretory system. It has a suggested role in osmoregulation and as a corticotropin-releasing factor. The non-hormonal portion of this precursor may be a urotensin binding protein, urophysin. This Carassius auratus (Goldfish) protein is UI.